The sequence spans 266 residues: Cell division protein FtsQ (266 aa).

Over 1–31 the chain is Cytoplasmic; the sequence is MRQKTSSNKKKQKNTNNISLRRKLGLMYKKA. Residues 32 to 52 form a helical membrane-spanning segment; it reads ILGLKIVLMIFVCLFVFTKYF. Residues 53–266 are Periplasmic-facing; the sequence is TSIKTYLITN…DRNKYYIQKY (214 aa). One can recognise a POTRA domain in the interval 72-140; that stretch reads FRLENVIIEG…NTVYIKLFER (69 aa).

It belongs to the FtsQ/DivIB family. FtsQ subfamily.

Its subcellular location is the cell inner membrane. Functionally, essential cell division protein. The polypeptide is Cell division protein FtsQ (Rickettsia typhi (strain ATCC VR-144 / Wilmington)).